A 128-amino-acid polypeptide reads, in one-letter code: UPF0325 protein YaeH (128 aa).

It belongs to the UPF0325 family.

The sequence is that of UPF0325 protein YaeH from Salmonella agona (strain SL483).